The following is a 184-amino-acid chain: Two-component response regulator ARR5 (184 aa).

The Response regulatory domain maps to 26–154 (HVLAVDDSMV…DVKRLRDSLM (129 aa)). At D87 the chain carries 4-aspartylphosphate.

This sequence belongs to the ARR family. Type-A subfamily. In terms of processing, two-component system major event consists of a His-to-Asp phosphorelay between a sensor histidine kinase (HK) and a response regulator (RR). In plants, the His-to-Asp phosphorelay involves an additional intermediate named Histidine-containing phosphotransfer protein (HPt). This multistep phosphorelay consists of a His-Asp-His-Asp sequential transfer of a phosphate group between first a His and an Asp of the HK protein, followed by the transfer to a conserved His of the HPt protein and finally the transfer to an Asp in the receiver domain of the RR protein. In terms of tissue distribution, predominantly expressed in roots and shoot apical meristems.

It localises to the nucleus. Its function is as follows. Functions as a response regulator involved in His-to-Asp phosphorelay signal transduction system. Phosphorylation of the Asp residue in the receiver domain activates the ability of the protein to promote the transcription of target genes. Type-A response regulators seem to act as negative regulators of the cytokinin signaling. This Arabidopsis thaliana (Mouse-ear cress) protein is Two-component response regulator ARR5 (ARR5).